A 333-amino-acid chain; its full sequence is MDERLLSGESAYEDADLEYSLRPQTLRQYIGQDKAKHNLEVFIEAAKMREETLDHVLLYGPPGLGKTTLANIIANEMGVNVRTTSGPAIERPGDLAAVLTSLQPGDVLFIDEIHRLHRSIEEVLYPAMEDFCLDIVIGKGPSARSVRLDLPPFTLVGATTRAGALSAPLRDRFGVLSRLEYYTVDQLSEIVERTAEVFEVEIDSLAALEIARRARGTPRIANRLLRRVRDFAQVRGNGTVTMEITQMALELLQVDKLGLDHIDHKLLLGIIEKFRGGPVGLETVSATIGEESHTIEDVYEPYLLQIGFLQRTPRGRIVTPLAYEHFGMEMPKV.

Residues 1-182 form a large ATPase domain (RuvB-L) region; the sequence is MDERLLSGES…FGVLSRLEYY (182 aa). Residues L21, R22, G63, K66, T67, T68, 129–131, R172, Y182, and R219 contribute to the ATP site; that span reads EDF. T67 provides a ligand contact to Mg(2+). Residues 183 to 253 are small ATPAse domain (RuvB-S); that stretch reads TVDQLSEIVE…ITQMALELLQ (71 aa). Residues 256-333 are head domain (RuvB-H); sequence KLGLDHIDHK…EHFGMEMPKV (78 aa). DNA contacts are provided by R311 and R316.

The protein belongs to the RuvB family. Homohexamer. Forms an RuvA(8)-RuvB(12)-Holliday junction (HJ) complex. HJ DNA is sandwiched between 2 RuvA tetramers; dsDNA enters through RuvA and exits via RuvB. An RuvB hexamer assembles on each DNA strand where it exits the tetramer. Each RuvB hexamer is contacted by two RuvA subunits (via domain III) on 2 adjacent RuvB subunits; this complex drives branch migration. In the full resolvosome a probable DNA-RuvA(4)-RuvB(12)-RuvC(2) complex forms which resolves the HJ.

The protein resides in the cytoplasm. The catalysed reaction is ATP + H2O = ADP + phosphate + H(+). Its function is as follows. The RuvA-RuvB-RuvC complex processes Holliday junction (HJ) DNA during genetic recombination and DNA repair, while the RuvA-RuvB complex plays an important role in the rescue of blocked DNA replication forks via replication fork reversal (RFR). RuvA specifically binds to HJ cruciform DNA, conferring on it an open structure. The RuvB hexamer acts as an ATP-dependent pump, pulling dsDNA into and through the RuvAB complex. RuvB forms 2 homohexamers on either side of HJ DNA bound by 1 or 2 RuvA tetramers; 4 subunits per hexamer contact DNA at a time. Coordinated motions by a converter formed by DNA-disengaged RuvB subunits stimulates ATP hydrolysis and nucleotide exchange. Immobilization of the converter enables RuvB to convert the ATP-contained energy into a lever motion, pulling 2 nucleotides of DNA out of the RuvA tetramer per ATP hydrolyzed, thus driving DNA branch migration. The RuvB motors rotate together with the DNA substrate, which together with the progressing nucleotide cycle form the mechanistic basis for DNA recombination by continuous HJ branch migration. Branch migration allows RuvC to scan DNA until it finds its consensus sequence, where it cleaves and resolves cruciform DNA. This Bacillus cereus (strain ATCC 10987 / NRS 248) protein is Holliday junction branch migration complex subunit RuvB.